A 466-amino-acid polypeptide reads, in one-letter code: MVSQALRLLCLLLGLQGCLAAGGVAEASGGETRDXXWKPGPHRVFITQEEAHGVLHRRRRANAFLEELRPGSLERECKEEQCSFEEAREIFKDLERTKLFWISYSDGDQCASSPCQNGGSCKDQLQSYICFCLPAFEGRNCETYKDDQLICVNENGGCEQYCSDHTGTKRSCRCHEGYSLLADGVSCTPTVEYPCGKIPILEKRNASKPQGRIVGGKVCPKGECPWQVLLLVNGAQLCGGTLINTIWVVSAAHCFDKIKNWRNLIAVLGEHDLSEHDGDEQSRRVAQVIIPSTYIPGTTNHDIALLRLHQPVVLTDHVVPLCLPERAFSERTLAFVRFSLVSGWGQLLDRGATALELMVLNVPRLMTQDCLQQSRKVGDSPNITEYMFCAGYSDGSKDSCKGDSGGPHATHYRGTWYLTGIVSWGQGCASVGHFGVYTRVSQYIEWLQKLMRSEPRPGVLLRAPFP.

An N-terminal signal peptide occupies residues 1 to 20; it reads MVSQALRLLCLLLGLQGCLA. A propeptide spanning residues 21-60 is cleaved from the precursor; the sequence is AGGVAEASGGETRDXXWKPGPHRVFITQEEAHGVLHRRRR. Positions 61-105 constitute a Gla domain; it reads ANAFLEELRPGSLERECKEEQCSFEEAREIFKDLERTKLFWISYS. Glu-66, Glu-67, Glu-74, Glu-76, Glu-79, Glu-80, Glu-85, Glu-86, Glu-89, and Glu-95 each carry 4-carboxyglutamate. The cysteines at positions 77 and 82 are disulfide-linked. Positions 106 to 142 constitute an EGF-like 1; calcium-binding domain; the sequence is DGDQCASSPCQNGGSCKDQLQSYICFCLPAFEGRNCE. 10 disulfide bridges follow: Cys-110-Cys-121, Cys-115-Cys-130, Cys-132-Cys-141, Cys-151-Cys-162, Cys-158-Cys-172, Cys-174-Cys-187, Cys-195-Cys-322, Cys-219-Cys-224, Cys-238-Cys-254, and Cys-370-Cys-389. An O-linked (Glc...) serine; alternate glycan is attached at Ser-112. Residue Ser-112 is glycosylated (O-linked (Xyl...) serine; alternate). Residue Ser-120 is glycosylated (O-linked (Fuc) serine). (3R)-3-hydroxyaspartate is present on Asp-123. The region spanning 147–188 is the EGF-like 2 domain; sequence DQLICVNENGGCEQYCSDHTGTKRSCRCHEGYSLLADGVSCT. N-linked (GlcNAc...) asparagine glycosylation occurs at Asn-205. One can recognise a Peptidase S1 domain in the interval 213–452; the sequence is IVGGKVCPKG…YIEWLQKLMR (240 aa). Residues His-253 and Asp-302 each act as charge relay system in the active site. Asn-382 carries N-linked (GlcNAc...) asparagine glycosylation. Asp-398 lines the substrate pocket. Cys-400 and Cys-428 are disulfide-bonded. Ser-404 acts as the Charge relay system in catalysis.

The protein belongs to the peptidase S1 family. In terms of assembly, heterodimer of a light chain and a heavy chain linked by a disulfide bond. In terms of processing, the vitamin K-dependent, enzymatic carboxylation of some glutamate residues allows the modified protein to bind calcium. The iron and 2-oxoglutarate dependent 3-hydroxylation of aspartate and asparagine is (R) stereospecific within EGF domains. Post-translationally, O-glycosylated. O-fucosylated by POFUT1 on a conserved serine or threonine residue found in the consensus sequence C2-X(4,5)-[S/T]-C3 of EGF domains, where C2 and C3 are the second and third conserved cysteines. In terms of processing, can be either O-glucosylated or O-xylosylated at Ser-112 by POGLUT1.

Its subcellular location is the secreted. The catalysed reaction is Selective cleavage of Arg-|-Ile bond in factor X to form factor Xa.. Functionally, initiates the extrinsic pathway of blood coagulation. Serine protease that circulates in the blood in a zymogen form. Factor VII is converted to factor VIIa by factor Xa, factor XIIa, factor IXa, or thrombin by minor proteolysis. In the presence of tissue factor and calcium ions, factor VIIa then converts factor X to factor Xa by limited proteolysis. Factor VIIa also converts factor IX to factor IXa in the presence of tissue factor and calcium. The protein is Coagulation factor VII (F7) of Pan troglodytes (Chimpanzee).